The sequence spans 192 residues: Thymidylate kinase (192 aa).

7–14 (GIDCVGKS) lines the ATP pocket.

It belongs to the thymidylate kinase family.

The catalysed reaction is dTMP + ATP = dTDP + ADP. Functionally, phosphorylation of dTMP to form dTDP in both de novo and salvage pathways of dTTP synthesis. The chain is Thymidylate kinase from Campylobacter jejuni subsp. jejuni serotype O:23/36 (strain 81-176).